The following is a 330-amino-acid chain: Small ribosomal subunit protein uS2 (330 aa).

The protein belongs to the universal ribosomal protein uS2 family.

This is Small ribosomal subunit protein uS2 from Bradyrhizobium sp. (strain BTAi1 / ATCC BAA-1182).